Here is a 457-residue protein sequence, read N- to C-terminus: Non-structural protein V (457 aa).

Disordered regions lie at residues 26–104 (KTYG…DPDD) and 193–403 (FVPK…MPIK). 2 stretches are compositionally biased toward polar residues: residues 28-37 (YGRSSIQQPS) and 77-96 (DLSSVTSSDGTIGQRVSNTR). The segment covering 240–252 (SDDEDENQLEYED) has biased composition (acidic residues). A Phosphoserine; by host modification is found at Ser-257. Positions 296–317 (FPEKEETPDVRRKDSLMQDSCK) are enriched in basic and acidic residues. Ser-350 carries the phosphoserine; by host modification. Residues His-406, Cys-425, Cys-429, Cys-441, Cys-443, Cys-446, Cys-450, and Cys-453 each contribute to the Zn(2+) site.

It belongs to the paramyxoviruses V protein family. In terms of assembly, interacts with host IFIH1/MDA5, DHX58/LGP2, STAT1 and STAT2.

The protein localises to the host cytoplasm. In terms of biological role, plays an essential role in the inhibition of host immune response. Prevents the establishment of cellular antiviral state by blocking interferon-alpha/beta (IFN-alpha/beta) production and signaling pathway. Interacts with host IFIH1/MDA5 and DHX58/LGP2 to inhibit the transduction pathway involved in the activation of IFN-beta promoter, thus protecting the virus against cell antiviral state. Blocks the type I interferon signaling pathway by interacting with host STAT1 and STAT2 and thereby inhibiting their phosphorylation and subsequent nuclear translocation. Efficiently blocks the type II interferon signaling pathway. The protein is Non-structural protein V (P/V/C) of Hendra virus (isolate Horse/Autralia/Hendra/1994).